Reading from the N-terminus, the 455-residue chain is Ribulose bisphosphate carboxylase large chain (455 aa).

Lys-5 carries the N6,N6,N6-trimethyllysine modification. Substrate contacts are provided by Asn-114 and Thr-164. The active-site Proton acceptor is Lys-166. Residue Lys-168 coordinates substrate. 3 residues coordinate Mg(2+): Lys-192, Asp-194, and Glu-195. Lys-192 bears the N6-carboxylysine mark. His-285 functions as the Proton acceptor in the catalytic mechanism. Residues Arg-286, His-318, and Ser-370 each coordinate substrate.

Belongs to the RuBisCO large chain family. Type I subfamily. Heterohexadecamer of 8 large chains and 8 small chains; disulfide-linked. The disulfide link is formed within the large subunit homodimers. It depends on Mg(2+) as a cofactor. Post-translationally, the disulfide bond which can form in the large chain dimeric partners within the hexadecamer appears to be associated with oxidative stress and protein turnover.

The protein localises to the plastid. The protein resides in the chloroplast. It carries out the reaction 2 (2R)-3-phosphoglycerate + 2 H(+) = D-ribulose 1,5-bisphosphate + CO2 + H2O. The enzyme catalyses D-ribulose 1,5-bisphosphate + O2 = 2-phosphoglycolate + (2R)-3-phosphoglycerate + 2 H(+). Functionally, ruBisCO catalyzes two reactions: the carboxylation of D-ribulose 1,5-bisphosphate, the primary event in carbon dioxide fixation, as well as the oxidative fragmentation of the pentose substrate in the photorespiration process. Both reactions occur simultaneously and in competition at the same active site. This Senna didymobotrya (Popcorn cassia) protein is Ribulose bisphosphate carboxylase large chain.